The primary structure comprises 904 residues: Phosphoenolpyruvate carboxylase (904 aa).

The disordered stretch occupies residues 52–71 (ISRRESDAPPSTLSEQLTGR). Over residues 60–70 (PPSTLSEQLTG) the composition is skewed to polar residues. Active-site residues include histidine 151 and lysine 570.

This sequence belongs to the PEPCase type 1 family. Mg(2+) serves as cofactor.

It catalyses the reaction oxaloacetate + phosphate = phosphoenolpyruvate + hydrogencarbonate. Forms oxaloacetate, a four-carbon dicarboxylic acid source for the tricarboxylic acid cycle. This chain is Phosphoenolpyruvate carboxylase, found in Xanthomonas euvesicatoria pv. vesicatoria (strain 85-10) (Xanthomonas campestris pv. vesicatoria).